Reading from the N-terminus, the 316-residue chain is Spermidine synthase (316 aa).

One can recognise a PABS domain in the interval 25-262; it reads PGWFSEISPM…GVIGFMLCST (238 aa). S-adenosyl 3-(methylsulfanyl)propylamine is bound at residue glutamine 56. Residue tyrosine 86 participates in putrescine binding. Residues glutamine 87, aspartate 111, glutamate 131, 162–163, and aspartate 181 contribute to the S-adenosyl 3-(methylsulfanyl)propylamine site; that span reads DG. The active-site Proton acceptor is the aspartate 181. Putrescine is bound by residues 181–184 and tyrosine 250; that span reads DSSD.

Belongs to the spermidine/spermine synthase family.

It catalyses the reaction S-adenosyl 3-(methylsulfanyl)propylamine + putrescine = S-methyl-5'-thioadenosine + spermidine + H(+). The protein operates within amine and polyamine biosynthesis; spermidine biosynthesis; spermidine from putrescine: step 1/1. In Coffea arabica (Arabian coffee), this protein is Spermidine synthase.